The sequence spans 112 residues: Nitrogenase-stabilizing/protective protein NifW (112 aa).

Belongs to the NifW family. Homotrimer; associates with NifD.

Functionally, may protect the nitrogenase Fe-Mo protein from oxidative damage. The protein is Nitrogenase-stabilizing/protective protein NifW of Burkholderia vietnamiensis (strain G4 / LMG 22486) (Burkholderia cepacia (strain R1808)).